Reading from the N-terminus, the 209-residue chain is Probable GTP-binding protein EngB (209 aa).

In terms of domain architecture, EngB-type G spans 24–198 (EGMEVAFAGR…HGILDQWLGL (175 aa)). GTP is bound by residues 32 to 39 (GRSNAGKS), 59 to 63 (GRTQL), 77 to 80 (DLPG), 144 to 147 (TKAD), and 177 to 179 (FSA). Mg(2+) contacts are provided by serine 39 and threonine 61.

This sequence belongs to the TRAFAC class TrmE-Era-EngA-EngB-Septin-like GTPase superfamily. EngB GTPase family. Mg(2+) is required as a cofactor.

Functionally, necessary for normal cell division and for the maintenance of normal septation. The chain is Probable GTP-binding protein EngB from Thioalkalivibrio sulfidiphilus (strain HL-EbGR7).